We begin with the raw amino-acid sequence, 651 residues long: p-hydroxybenzoic acid efflux pump subunit AaeB (651 aa).

11 helical membrane-spanning segments follow: residues 11-31 (FAFKLSFAIVAALFLGFHLQL), 41-61 (AAIVAAGPAFAAGGEPFSGAI), 67-87 (LRIIGTFIGCIGGLIIIVLTI), 91-111 (VLTLMLCCLWAGVCTWISSLV), 119-139 (FGLAGYTALIIIVTTGETPLL), 150-170 (EIVLGIVCAVMADLLFSPRSI), 368-388 (LFWLWTGWTSGAGCMVMIAVV), 405-425 (FLLGVIMALPIGALYFMFIIP), 429-449 (QSMLLLCISLGLLAFIIGIEV), 460-480 (LASTINIMVLSNPMEFNVSLF), and 481-501 (LDSALGQIVGCFVSLIVLLLI).

It belongs to the aromatic acid exporter ArAE (TC 2.A.85) family.

The protein resides in the cell inner membrane. Its function is as follows. Forms an efflux pump with AaeA. Could function as a metabolic relief valve, allowing to eliminate certain compounds when they accumulate to high levels in the cell. The polypeptide is p-hydroxybenzoic acid efflux pump subunit AaeB (Yersinia enterocolitica serotype O:8 / biotype 1B (strain NCTC 13174 / 8081)).